The following is a 447-amino-acid chain: Tubulin beta-5 chain (447 aa).

GTP-binding residues include Gln-11, Glu-69, Ser-138, Gly-142, Thr-143, Gly-144, Asn-204, and Asn-226. Glu-69 contacts Mg(2+). The interval 421 to 447 (EYQQYQDATADDEEEDYGDEEEDEVAA) is disordered. Residues 429 to 447 (TADDEEEDYGDEEEDEVAA) are compositionally biased toward acidic residues.

Belongs to the tubulin family. As to quaternary structure, dimer of alpha and beta chains. A typical microtubule is a hollow water-filled tube with an outer diameter of 25 nm and an inner diameter of 15 nM. Alpha-beta heterodimers associate head-to-tail to form protofilaments running lengthwise along the microtubule wall with the beta-tubulin subunit facing the microtubule plus end conferring a structural polarity. Microtubules usually have 13 protofilaments but different protofilament numbers can be found in some organisms and specialized cells. Mg(2+) serves as cofactor. In terms of tissue distribution, expressed in roots, leaf sheaths, and suspension cultured cells.

The protein localises to the cytoplasm. It is found in the cytoskeleton. Its function is as follows. Tubulin is the major constituent of microtubules, a cylinder consisting of laterally associated linear protofilaments composed of alpha- and beta-tubulin heterodimers. Microtubules grow by the addition of GTP-tubulin dimers to the microtubule end, where a stabilizing cap forms. Below the cap, tubulin dimers are in GDP-bound state, owing to GTPase activity of alpha-tubulin. The protein is Tubulin beta-5 chain (TUBB5) of Oryza sativa subsp. japonica (Rice).